The chain runs to 512 residues: Dihydroniloticin synthase CYP71CD2 (512 aa).

The helical transmembrane segment at 1-21 threads the bilayer; it reads MNLQLDYFSITSFLVFLVVLF. Asn-436 lines the heme pocket.

The protein belongs to the cytochrome P450 family. The cofactor is heme. As to expression, mainly expressed in petioles and roots, and, to a lower extent, in leaves.

The protein localises to the membrane. It catalyses the reaction tirucalla-7,24-dien-3beta-ol + 2 reduced [NADPH--hemoprotein reductase] + 2 O2 = dihydroniloticin + 2 oxidized [NADPH--hemoprotein reductase] + 2 H2O + 2 H(+). The protein operates within secondary metabolite biosynthesis; terpenoid biosynthesis. In terms of biological role, monooxygenase involved in the biosynthesis of limonoids triterpene natural products such as azadirachtin, an antifeedant widely used as bioinsecticide, and possessing many medicinal applications including anti-tumoral, anti-malarial, anti-rheumatic, antibacterial, anti-inflammatory, anti-pyretic and diuretic effects. Catalyzes the conversion of tirucalladienol to dihydroniloticin. In Melia azedarach (Chinaberry tree), this protein is Dihydroniloticin synthase CYP71CD2.